The sequence spans 1436 residues: MSSAGDSGPGYVLNDFDAVPRGTRGRRPGLVKDSLLDLVKVQKGSYNSFTPNNESNERLEAIFHTIFPISDPLHRATIEFLNCRVDDLKYSESECIKRGITFSAQVIASIRLVIMQDGVSLEKYQEIKEYDDHSKLATVIKSAEEQEVRFCELPMMTDKGTFIINGVEKVIVSQMHRSPGVFFDSDKGKTYNSGKLIYSARVIPYRGSWLDIEFDVKDHLYFRIDRKRKLPISVLLKALGLSNNDILNKFMKNRVYKHKSGWKVPFFPDKFKGVRLPFDLKNVEGNVLLKANVRITSKLAKNLYDNGLKEYLIPYDSICGLFLAEDLIDSASSTKILSAGESIKLEDIKKLELLSIDKISVLNIDNVSVGPYILNTLFLDENMSYENALYEIYKVLRPGEVPVLKIVEEFFRNLFFSPEYYDLSNIGRLKLNSCLGLNYEENLTTLTHEDIIEIIRKIVLLRDGQGSVDDDIDHLANRRVRSVGEFIENQFRTGLLKLGRAVVDSMSTSSLDKVSPSDFINPKVLTNVLRDFFNSSQLSQFMDQTNPLSEITHKRRLSALGPGGLTRERAGFEVRDVHPTHYGRICPIETPEQNIAYNSLAIYARINKYGFIESPYRKVVNKVVTDQIEYLSAIDEGLYYIADTSAKLDENNCFVDDMLYCRYAGTFVMVNSNQVSYIDLSPKQVISVAASLIPFLENDDANRALMGSNMQRQAVPLLKPTAPLVATGMESFVASGSGAVVLAKRGGIVDSSDSNSIVIRAFDKGGINYLDVDIYHLRKFQRSNHNTCINQKPLVHVGDCVKEGDVIADGPAINNGELALGQNLLVAFMSWQGYNFEDSIIISSEVVKKDLFTSIHIEEFECVVHDTPLGSEKITRAIPGVNEENLYHLDDSGIVKVGTRVGPGYILVGKVTPRHSLSLPPETKLLMTIFGEKSFDCVDSSLYTSPDIEGIVIDVQVFTRRGEEENERAFLIKQKEANDFEKERDHIINVINQYFYDELRKILINSGSQDRESINFIEREGWWDIGLKNQSISKQVESLKKDFDEKVSHAITNFKRKVEKLHEGYDLPQGVSMSVKVFIAVKHSLQPGDKMAGRHGNKGVISRVVPVEDMPYLEDGTPIDIILNPLGVPSRMNVGQMLETHVGWACKKLGEKVGNILDEINKIKRAFCEAIRSLSDDDFEKFAALYLDNKKFEDINDDEITASILDTPNKDELNNELTTLVENYFNSCKDAHSSLRHFLIEVYSCGSNLSICNNIRDINDNHLIEFAYKLRDGIPVTAPVFEGPKDEQIVKLFELAGLDNSGQVVLYDGCSGEKFDRKVTVGYMYMLKLHHLVDGKIHARSVGPYSLVTQQPLGGKSHFGGQRFGEMECWALQAYGAAYTLQEMLTVKSDDINGRVKIYESVIKGDSNFECGIPESFNVMIKELRSLCFNVDLNAK.

The protein belongs to the RNA polymerase beta chain family. In terms of assembly, the RNAP catalytic core consists of 2 alpha, 1 beta, 1 beta' and 1 omega subunit. When a sigma factor is associated with the core the holoenzyme is formed, which can initiate transcription.

The enzyme catalyses RNA(n) + a ribonucleoside 5'-triphosphate = RNA(n+1) + diphosphate. In terms of biological role, DNA-dependent RNA polymerase catalyzes the transcription of DNA into RNA using the four ribonucleoside triphosphates as substrates. The sequence is that of DNA-directed RNA polymerase subunit beta from Wolbachia pipientis.